The primary structure comprises 417 residues: Hydrogen cyanide synthase subunit HcnC (417 aa).

The first 18 residues, 1–18, serve as a signal peptide directing secretion; it reads MIKHYDVVIAGGGVIGAS. 7 to 21 serves as a coordination point for FAD; sequence VVIAGGGVIGASCAY. A lipid anchor (N-palmitoyl cysteine) is attached at Cys19. The S-diacylglycerol cysteine moiety is linked to residue Cys19. The chain crosses the membrane as a helical span at residues 46 to 66; sequence SAGGLWAIGESVGLGCGVIFF.

This sequence belongs to the FAD-dependent glycerol-3-phosphate dehydrogenase family. Heterotrimer of HcnA, HcnB and HcnC.

The protein localises to the cell membrane. It carries out the reaction glycine + 2 A = hydrogen cyanide + 2 AH2 + CO2. Functionally, a three-component membrane-bound flavoenzyme that catalyzes the formation of hydrogen cyanide, a secondary metabolite, by transfer of electrons to a cyanide-resistant branch of the aerobic respiratory chain. Contributes to suppression of black root rot of tobacco. This is Hydrogen cyanide synthase subunit HcnC from Pseudomonas protegens (strain DSM 19095 / LMG 27888 / CFBP 6595 / CHA0).